Consider the following 407-residue polypeptide: Substance-P receptor (407 aa).

The segment at 1-20 (MDNVLPVDSDLFPNTSTNTS) is disordered. Residues 1–31 (MDNVLPVDSDLFPNTSTNTSESNQFVQPTWQ) lie on the Extracellular side of the membrane. 2 N-linked (GlcNAc...) asparagine glycosylation sites follow: asparagine 14 and asparagine 18. Residues 32-54 (IVLWAAAYTVIVVTSVVGNVVVI) traverse the membrane as a helical segment. The Cytoplasmic portion of the chain corresponds to 55 to 64 (WIILAHKRMR). The chain crosses the membrane as a helical span at residues 65 to 86 (TVTNYFLVNLAFAEACMAAFNT). The Extracellular segment spans residues 87-106 (VVNFTYAVHNVWYYGLFYCK). Cysteine 105 and cysteine 180 are oxidised to a cystine. A helical transmembrane segment spans residues 107 to 128 (FHNFFPIAALFASIYSMTAVAF). Residues 129 to 148 (DRYMAIIHPLQPRLSATATK) lie on the Cytoplasmic side of the membrane. The helical transmembrane segment at 149–169 (VVIFVIWVLALLLAFPQGYYS) threads the bilayer. Over 170–194 (TTETMPSRVVCMIEWPEHPNRTYEK) the chain is Extracellular. Residues 195-219 (AYHICVTVLIYFLPLLVIGYAYTVV) traverse the membrane as a helical segment. Residues 220–248 (GITLWASEIPGDSSDRYHEQVSAKRKVVK) are Cytoplasmic-facing. The chain crosses the membrane as a helical span at residues 249 to 270 (MMIVVVCTFAICWLPFHIFFLL). Over 271–283 (PYINPDLYLKKFI) the chain is Extracellular. The helical transmembrane segment at 284–308 (QQVYLASMWLAMSSTMYNPIIYCCL) threads the bilayer. Over 309-407 (NDRFRLGFKH…SSSFYSNMLA (99 aa)) the chain is Cytoplasmic. Residue cysteine 322 is the site of S-palmitoyl cysteine attachment. Residues 362–407 (VGAHEDEPEEGPKATPSSLDLTSNGSSRSNSKTMTESSSFYSNMLA) form a disordered region. The segment covering 376 to 407 (TPSSLDLTSNGSSRSNSKTMTESSSFYSNMLA) has biased composition (polar residues).

The protein belongs to the G-protein coupled receptor 1 family. In terms of assembly, interacts with ARRB1.

The protein resides in the cell membrane. Functionally, this is a receptor for the tachykinin neuropeptide substance P. It is probably associated with G proteins that activate a phosphatidylinositol-calcium second messenger system. The rank order of affinity of this receptor to tachykinins is: substance P &gt; substance K &gt; neuromedin K. The sequence is that of Substance-P receptor (Tacr1) from Mus musculus (Mouse).